A 186-amino-acid chain; its full sequence is MNTIRNSICLTIITMVLCGFLFPLAITLIGQIFFYQQANGSLITYDNRIVGSKLIGQHWTETRYFHGRPSAVDYNMNPEKLYKNGVSSGGSNESNGNTELIARMKHHVKFGNSNVTIDAATSSGSGLDPHITVENALKQAPRIADARHISTSRVADLIQHRKQRGVLTNDYVNVLELNIALDKMKD.

A helical membrane pass occupies residues 10-30 (LTIITMVLCGFLFPLAITLIG).

This sequence belongs to the KdpC family. As to quaternary structure, the system is composed of three essential subunits: KdpA, KdpB and KdpC.

It is found in the cell membrane. Its function is as follows. Part of the high-affinity ATP-driven potassium transport (or Kdp) system, which catalyzes the hydrolysis of ATP coupled with the electrogenic transport of potassium into the cytoplasm. This subunit acts as a catalytic chaperone that increases the ATP-binding affinity of the ATP-hydrolyzing subunit KdpB by the formation of a transient KdpB/KdpC/ATP ternary complex. The protein is Potassium-transporting ATPase KdpC subunit of Staphylococcus aureus (strain MSSA476).